The primary structure comprises 369 residues: Type 2 DNA topoisomerase 6 subunit A (369 aa).

Positions 11–149 (QRDLLAREKL…FHMRPEEDGA (139 aa)) constitute a Topo IIA-type catalytic domain. Tyrosine 106 (O-(5'-phospho-DNA)-tyrosine intermediate) is an active-site residue. Positions 202 and 254 each coordinate Mg(2+).

It belongs to the TOP6A family. In terms of assembly, homodimer. Heterotetramer of two Top6A and two Top6B chains. The cofactor is Mg(2+).

The catalysed reaction is ATP-dependent breakage, passage and rejoining of double-stranded DNA.. Its function is as follows. Relaxes both positive and negative superturns and exhibits a strong decatenase activity. The sequence is that of Type 2 DNA topoisomerase 6 subunit A from Methanosarcina barkeri (strain Fusaro / DSM 804).